The primary structure comprises 170 residues: Thialysine N-epsilon-acetyltransferase (170 aa).

Residues 4-168 (VRIREAKEGD…FQGEATRKLA (165 aa)) form the N-acetyltransferase domain. 27-28 (FE) lines the substrate pocket. K29 carries the post-translational modification N6-acetyllysine. Residue E92 coordinates substrate. Residues 94-96 (IYV), 102-107 (GQGIGS), 133-135 (NQR), and Y140 contribute to the acetyl-CoA site. The Proton donor role is filled by Y140. E152 is a binding site for substrate.

Belongs to the acetyltransferase family. Homodimer. Widely expressed. Under physiological conditions, SSAT2 is expressed at lower level that SSAT1 (SSAT). Many tissues express only SSAT1, several tissues express both SSAT1 and SSAT2, and bone, cervix, ovary and pineal gland expressed only SSAT2.

Its subcellular location is the cytoplasm. It carries out the reaction S-(2-aminoethyl)-L-cysteine + acetyl-CoA = S-(2-acetamidoethyl)-L-cysteine + CoA + H(+). The enzyme catalyses an alkane-alpha,omega-diamine + acetyl-CoA = an N-acetylalkane-alpha,omega-diamine + CoA + H(+). Its function is as follows. Catalyzes the N-acetylation of the amino acid thialysine (S-(2-aminoethyl)-L-cysteine), a L-lysine analog with the 4-methylene group substituted with a sulfur. May also catalyze acetylation of polyamines, such as norspermidine, spermidine or spermine. However, ability to acetylate polyamines is weak, suggesting that it does not act as a diamine acetyltransferase in vivo. In Homo sapiens (Human), this protein is Thialysine N-epsilon-acetyltransferase.